We begin with the raw amino-acid sequence, 223 residues long: Glutathione S-transferase A2 (223 aa).

An N-acetylalanine modification is found at A2. The GST N-terminal domain occupies 3-83 (GKPKLHYFNG…YIATKYNLYG (81 aa)). K4 carries the post-translational modification N6-succinyllysine. Residues Y9, R45, 54-55 (QV), and 67-68 (QT) each bind glutathione. Residues 85 to 208 (DMKERALIDM…QPGSQRKPPM (124 aa)) form the GST C-terminal domain.

Belongs to the GST superfamily. Alpha family. In terms of assembly, homodimer. As to expression, expressed in corpus luteum, adrenal gland, testis, liver, lung, thyroid and kidney.

The protein localises to the cytoplasm. The catalysed reaction is RX + glutathione = an S-substituted glutathione + a halide anion + H(+). In terms of biological role, conjugation of reduced glutathione to a wide number of exogenous and endogenous hydrophobic electrophiles. The polypeptide is Glutathione S-transferase A2 (GSTA2) (Bos taurus (Bovine)).